Reading from the N-terminus, the 197-residue chain is MSLKPLNMLLVPFLLLILAADFPLKAKASLLPFIDSPNTLLSDLWSDRFPDPFRVLEQIPYGVEKHEPSITLSHARVDWKETPEGHVIMVDVPGLKKDDIKIEVEENRVLRVSGERKKEEDKKGDHWHRVERSYGKFWRQFKLPQNVDLDSVKAKMENGVLTLTLHKLSHDKIKGPRMVSIVEEDDKPSKIVNDELK.

A signal peptide spans 1-28 (MSLKPLNMLLVPFLLLILAADFPLKAKA). Positions 68–184 (PSITLSHARV…GPRMVSIVEE (117 aa)) constitute a sHSP domain. The short motif at 194 to 197 (DELK) is the Prevents secretion from ER element.

This sequence belongs to the small heat shock protein (HSP20) family. Forms oligomeric structures.

It localises to the endoplasmic reticulum lumen. This is 22.7 kDa class IV heat shock protein (HSP22.7) from Pisum sativum (Garden pea).